We begin with the raw amino-acid sequence, 320 residues long: Malate dehydrogenase (320 aa).

NAD(+) contacts are provided by residues 10–15 and Asp34; that span reads GAGNIG. Residues Arg83 and Arg89 each coordinate substrate. Residues Asn96 and 119–121 each bind NAD(+); that span reads ITN. Substrate contacts are provided by Asn121 and Arg152. His176 serves as the catalytic Proton acceptor.

Belongs to the LDH/MDH superfamily. MDH type 3 family.

The catalysed reaction is (S)-malate + NAD(+) = oxaloacetate + NADH + H(+). In terms of biological role, catalyzes the reversible oxidation of malate to oxaloacetate. In Sphingopyxis alaskensis (strain DSM 13593 / LMG 18877 / RB2256) (Sphingomonas alaskensis), this protein is Malate dehydrogenase.